Consider the following 115-residue polypeptide: Large ribosomal subunit protein bL19 (115 aa).

It belongs to the bacterial ribosomal protein bL19 family.

In terms of biological role, this protein is located at the 30S-50S ribosomal subunit interface and may play a role in the structure and function of the aminoacyl-tRNA binding site. This Hydrogenovibrio crunogenus (strain DSM 25203 / XCL-2) (Thiomicrospira crunogena) protein is Large ribosomal subunit protein bL19.